A 179-amino-acid chain; its full sequence is MNATPASADDLIVIGKIYSVHGVRGEVKVYSFTDPIGNLLDYKTWTLRREGSVDKQVELVSGRLQSKFLVTKLKGLDDREEARLLSGYEICVPRNLFPDLDDGEYYWYQLEGLKVIDQLGQLLGKIDHLLETGSNDVMVVKPCAGSLDDRERLLPYTEQCVLAIDMAAGEMKVDWDADF.

The PRC barrel domain occupies 102 to 179; it reads DGEYYWYQLE…EMKVDWDADF (78 aa).

Belongs to the RimM family. As to quaternary structure, binds ribosomal protein uS19.

It is found in the cytoplasm. Its function is as follows. An accessory protein needed during the final step in the assembly of 30S ribosomal subunit, possibly for assembly of the head region. Essential for efficient processing of 16S rRNA. May be needed both before and after RbfA during the maturation of 16S rRNA. It has affinity for free ribosomal 30S subunits but not for 70S ribosomes. This Pseudomonas syringae pv. syringae (strain B728a) protein is Ribosome maturation factor RimM.